The following is a 330-amino-acid chain: Protein pelota homolog (330 aa).

This sequence belongs to the eukaryotic release factor 1 family. Pelota subfamily. In terms of assembly, monomer. The cofactor is a divalent metal cation.

Its subcellular location is the cytoplasm. Its function is as follows. May function in recognizing stalled ribosomes, interact with stem-loop structures in stalled mRNA molecules, and effect endonucleolytic cleavage of the mRNA. May play a role in the release non-functional ribosomes and degradation of damaged mRNAs. Has endoribonuclease activity. The chain is Protein pelota homolog from Pyrobaculum neutrophilum (strain DSM 2338 / JCM 9278 / NBRC 100436 / V24Sta) (Thermoproteus neutrophilus).